Here is a 505-residue protein sequence, read N- to C-terminus: Glutamate--tRNA ligase (505 aa).

Residues 12 to 22 (PSPTGDPHVGT) carry the 'HIGH' region motif. Positions 253-257 (KLSKR) match the 'KMSKS' region motif. Lysine 256 contacts ATP.

Belongs to the class-I aminoacyl-tRNA synthetase family. Glutamate--tRNA ligase type 1 subfamily. As to quaternary structure, monomer.

Its subcellular location is the cytoplasm. It catalyses the reaction tRNA(Glu) + L-glutamate + ATP = L-glutamyl-tRNA(Glu) + AMP + diphosphate. Functionally, catalyzes the attachment of glutamate to tRNA(Glu) in a two-step reaction: glutamate is first activated by ATP to form Glu-AMP and then transferred to the acceptor end of tRNA(Glu). This is Glutamate--tRNA ligase from Chlamydia abortus (strain DSM 27085 / S26/3) (Chlamydophila abortus).